A 432-amino-acid polypeptide reads, in one-letter code: Glutamyl-tRNA reductase (432 aa).

Substrate-binding positions include T49 to R52, S101, E106 to Q108, and Q112. Catalysis depends on C50, which acts as the Nucleophile. G181 to I186 provides a ligand contact to NADP(+).

The protein belongs to the glutamyl-tRNA reductase family. In terms of assembly, homodimer.

The catalysed reaction is (S)-4-amino-5-oxopentanoate + tRNA(Glu) + NADP(+) = L-glutamyl-tRNA(Glu) + NADPH + H(+). The protein operates within porphyrin-containing compound metabolism; protoporphyrin-IX biosynthesis; 5-aminolevulinate from L-glutamyl-tRNA(Glu): step 1/2. Catalyzes the NADPH-dependent reduction of glutamyl-tRNA(Glu) to glutamate 1-semialdehyde (GSA). This Xylella fastidiosa (strain M12) protein is Glutamyl-tRNA reductase.